The chain runs to 76 residues: Zinc finger protein 706 (76 aa).

The segment covering 1-13 (MARGQQKIQSQQK) has biased composition (low complexity). Disordered regions lie at residues 1–32 (MARG…QKAA) and 53–76 (TFKQ…DVQA). Residues 14 to 25 (NAKKQAGQKKKQ) show a composition bias toward basic residues. The C2H2-type zinc finger occupies 39–62 (YTCTVCRTQMPDPKTFKQHFESKH). Basic and acidic residues predominate over residues 53-62 (TFKQHFESKH).

Its subcellular location is the cytoplasm. It localises to the nucleus. Its function is as follows. Transcription repressor involved in the exit of embryonic stem cells (ESCs) from self-renewal. Acts by repressing expression of KLF4. This Homo sapiens (Human) protein is Zinc finger protein 706.